Reading from the N-terminus, the 1180-residue chain is DNA-directed RNA polymerase subunit beta' (1180 aa).

The Zn(2+) site is built by Cys60, Cys62, Cys75, and Cys78. Residues Asp449, Asp451, and Asp453 each contribute to the Mg(2+) site. Residues Cys792, Cys872, Cys879, and Cys882 each coordinate Zn(2+).

It belongs to the RNA polymerase beta' chain family. The RNAP catalytic core consists of 2 alpha, 1 beta, 1 beta' and 1 omega subunit. When a sigma factor is associated with the core the holoenzyme is formed, which can initiate transcription. The cofactor is Mg(2+). Requires Zn(2+) as cofactor.

The catalysed reaction is RNA(n) + a ribonucleoside 5'-triphosphate = RNA(n+1) + diphosphate. DNA-dependent RNA polymerase catalyzes the transcription of DNA into RNA using the four ribonucleoside triphosphates as substrates. The chain is DNA-directed RNA polymerase subunit beta' from Heliobacterium modesticaldum (strain ATCC 51547 / Ice1).